The chain runs to 344 residues: Arginine N-succinyltransferase (344 aa).

Succinyl-CoA is bound at residue leucine 125. Histidine 229 serves as the catalytic Proton donor.

It belongs to the arginine N-succinyltransferase family.

It catalyses the reaction succinyl-CoA + L-arginine = N(2)-succinyl-L-arginine + CoA + H(+). Its pathway is amino-acid degradation; L-arginine degradation via AST pathway; L-glutamate and succinate from L-arginine: step 1/5. In terms of biological role, catalyzes the transfer of succinyl-CoA to arginine to produce N(2)-succinylarginine. The sequence is that of Arginine N-succinyltransferase from Escherichia coli O157:H7.